The following is a 1009-amino-acid chain: Membrane alanyl aminopeptidase (1009 aa).

Residues 1–15 (MAAIKLLVLSLACAC) form the signal peptide. Positions 16–52 (VIAHSPIPPASRTIFLDERLEGGAFENIDAFENIELS) are cleaved as a propeptide — activation peptide. Position 338 to 342 (338 to 342 (GAMEN)) interacts with substrate. Histidine 374 serves as a coordination point for Zn(2+). The active-site Proton acceptor is the glutamate 375. Residues histidine 378 and glutamate 397 each contribute to the Zn(2+) site. A glycan (N-linked (GlcNAc...) asparagine) is linked at asparagine 906. Residues 955–980 (PSTSTTSTTAAPTTVTQPTITEPSTP) form a disordered region. A lipid anchor (GPI-anchor amidated aspartate) is attached at aspartate 987. A propeptide spans 988–1009 (SAMTSFASLFIISLGAILHLIL) (removed in mature form).

Belongs to the peptidase M1 family. Requires Zn(2+) as cofactor.

It is found in the cell membrane. In terms of biological role, binds to the B.thuringiensis toxin, CryIA(C). This is Membrane alanyl aminopeptidase from Heliothis virescens (Tobacco budworm moth).